A 760-amino-acid polypeptide reads, in one-letter code: General transcription and DNA repair factor IIH helicase subunit XPD (760 aa).

The region spanning 7–283 is the Helicase ATP-binding domain; the sequence is GLLVYFPYDY…KETDEQRLRD (277 aa). 42–49 is a binding site for ATP; that stretch reads MPSGTGKT. [4Fe-4S] cluster contacts are provided by C116, C134, C155, and C190. Positions 234–237 match the DEAH box motif; sequence DEAH. A mediates interaction with MMS19 region spans residues 438-637; that stretch reads MDASLAIKPV…TQSRILKARL (200 aa). Residues 682–695 carry the Nuclear localization signal motif; that stretch reads KRFARADKRGKLPR.

This sequence belongs to the helicase family. RAD3/XPD subfamily. Component of the 7-subunit TFIIH core complex composed of XPB/ERCC3, XPD/ERCC2, GTF2H1, GTF2H2, GTF2H3, GTF2H4 and GTF2H5, which is active in NER. The core complex associates with the 3-subunit CDK-activating kinase (CAK) module composed of CCNH/cyclin H, CDK7 and MNAT1 to form the 10-subunit holoenzyme (holo-TFIIH) active in transcription. The interaction with GTF2H2 results in the stimulation of the 5'--&gt;3' helicase activity. Component of the MMXD complex, which includes CIAO1, ERCC2, CIAO2B, MMS19 and SLC25A5. Interacts with CIAO1 and CIAO2B; the interaction WITH CIAO2B is direct. Interacts with ATF7IP. Interacts directly with MMS19. Part of TBP-based Pol II pre-initiation complex (PIC), in which Pol II core assembles with general transcription factors and other specific initiation factors including GTF2E1, GTF2E2, GTF2F1, GTF2F2, TCEA1, ERCC2, ERCC3, GTF2H2, GTF2H3, GTF2H4, GTF2H5, GTF2A1, GTF2A2, GTF2B and TBP; this large multi-subunit PIC complex mediates DNA unwinding and targets Pol II core to the transcription start site where the first phosphodiester bond forms. Mg(2+) serves as cofactor. Requires [4Fe-4S] cluster as cofactor. ISGylated.

The protein localises to the nucleus. It is found in the cytoplasm. Its subcellular location is the cytoskeleton. The protein resides in the spindle. It carries out the reaction Couples ATP hydrolysis with the unwinding of duplex DNA at the replication fork by translocating in the 5'-3' direction. This creates two antiparallel DNA single strands (ssDNA). The leading ssDNA polymer is the template for DNA polymerase III holoenzyme which synthesizes a continuous strand.. The catalysed reaction is ATP + H2O = ADP + phosphate + H(+). ATP-dependent 5'-3' DNA helicase. Component of the general transcription and DNA repair factor IIH (TFIIH) core complex which is involved in general and transcription-coupled nucleotide excision repair (NER) of damaged DNA. When complexed to CDK-activating kinase (CAK), involved in transcription by RNA polymerase II. In NER, TFIIH acts by opening DNA around the lesion to allow the excision of the damaged oligonucleotide and its replacement by a new DNA fragment. The ATP-dependent helicase activity of XPD/ERCC2 is required for DNA opening. In transcription, TFIIH has an essential role in transcription initiation. When the pre-initiation complex (PIC) has been established, TFIIH is required for promoter opening and promoter escape. Phosphorylation of the C-terminal tail (CTD) of the largest subunit of RNA polymerase II by the kinase module CAK controls the initiation of transcription. XPD/ERCC2 acts by forming a bridge between CAK and the core-TFIIH complex. Involved in the regulation of vitamin-D receptor activity. As part of the mitotic spindle-associated MMXD complex it plays a role in chromosome segregation. Might have a role in aging process and could play a causative role in the generation of skin cancers. The polypeptide is General transcription and DNA repair factor IIH helicase subunit XPD (Cricetulus griseus (Chinese hamster)).